A 320-amino-acid chain; its full sequence is Aspartate carbamoyltransferase catalytic subunit (320 aa).

R58 and T59 together coordinate carbamoyl phosphate. Residue K86 coordinates L-aspartate. Positions 108, 136, and 139 each coordinate carbamoyl phosphate. The L-aspartate site is built by R169 and R223. Carbamoyl phosphate is bound by residues G264 and P265.

It belongs to the aspartate/ornithine carbamoyltransferase superfamily. ATCase family. As to quaternary structure, heterododecamer (2C3:3R2) of six catalytic PyrB chains organized as two trimers (C3), and six regulatory PyrI chains organized as three dimers (R2).

The enzyme catalyses carbamoyl phosphate + L-aspartate = N-carbamoyl-L-aspartate + phosphate + H(+). It participates in pyrimidine metabolism; UMP biosynthesis via de novo pathway; (S)-dihydroorotate from bicarbonate: step 2/3. Catalyzes the condensation of carbamoyl phosphate and aspartate to form carbamoyl aspartate and inorganic phosphate, the committed step in the de novo pyrimidine nucleotide biosynthesis pathway. The chain is Aspartate carbamoyltransferase catalytic subunit from Cereibacter sphaeroides (strain ATCC 17025 / ATH 2.4.3) (Rhodobacter sphaeroides).